Consider the following 696-residue polypeptide: Polyribonucleotide nucleotidyltransferase (696 aa).

Residues Asp-483 and Asp-489 each contribute to the Mg(2+) site. The KH domain occupies 550-609 (PRITTIWVKVDKIRDVIGSGGKNIRSVTEATGVSIDIDDTGKINIASTNKEACDLAIKMI). An S1 motif domain is found at 619–687 (GKLYMGTVKK…KQGKIKLSRK (69 aa)).

Belongs to the polyribonucleotide nucleotidyltransferase family. Mg(2+) is required as a cofactor.

It localises to the cytoplasm. The catalysed reaction is RNA(n+1) + phosphate = RNA(n) + a ribonucleoside 5'-diphosphate. Functionally, involved in mRNA degradation. Catalyzes the phosphorolysis of single-stranded polyribonucleotides processively in the 3'- to 5'-direction. This is Polyribonucleotide nucleotidyltransferase from Geobacter sp. (strain M21).